The following is a 125-amino-acid chain: Prefoldin subunit beta (125 aa).

The protein belongs to the prefoldin subunit beta family. Heterohexamer of two alpha and four beta subunits.

The protein localises to the cytoplasm. Its function is as follows. Molecular chaperone capable of stabilizing a range of proteins. Seems to fulfill an ATP-independent, HSP70-like function in archaeal de novo protein folding. The protein is Prefoldin subunit beta of Pyrobaculum islandicum (strain DSM 4184 / JCM 9189 / GEO3).